Here is a 466-residue protein sequence, read N- to C-terminus: Acetyl-coenzyme A carboxylase carboxyl transferase subunit beta, chloroplastic (466 aa).

A CoA carboxyltransferase N-terminal domain is found at 198–466 (LWIQCENCYE…FPLNQNSIGQ (269 aa)). Zn(2+)-binding residues include cysteine 202, cysteine 205, cysteine 221, and cysteine 224. The C4-type zinc finger occupies 202–224 (CENCYELNYKKLLKSKMRICDEC).

This sequence belongs to the AccD/PCCB family. In terms of assembly, acetyl-CoA carboxylase is a heterohexamer composed of biotin carboxyl carrier protein, biotin carboxylase and 2 subunits each of ACCase subunit alpha and ACCase plastid-coded subunit beta (accD). Zn(2+) serves as cofactor.

The protein localises to the plastid. Its subcellular location is the chloroplast stroma. The enzyme catalyses N(6)-carboxybiotinyl-L-lysyl-[protein] + acetyl-CoA = N(6)-biotinyl-L-lysyl-[protein] + malonyl-CoA. It functions in the pathway lipid metabolism; malonyl-CoA biosynthesis; malonyl-CoA from acetyl-CoA: step 1/1. Component of the acetyl coenzyme A carboxylase (ACC) complex. Biotin carboxylase (BC) catalyzes the carboxylation of biotin on its carrier protein (BCCP) and then the CO(2) group is transferred by the transcarboxylase to acetyl-CoA to form malonyl-CoA. The polypeptide is Acetyl-coenzyme A carboxylase carboxyl transferase subunit beta, chloroplastic (Fagopyrum esculentum subsp. ancestrale (Wild buckwheat)).